A 158-amino-acid polypeptide reads, in one-letter code: Cathelicidin-6 (158 aa).

The first 29 residues, 1–29, serve as a signal peptide directing secretion; it reads METQRASLSLGRWSLWLLLLGLALPSASA. Positions 30 to 131 are excised as a propeptide; sequence QALSYREAVL…NVTCEELQSV (102 aa). Intrachain disulfides connect Cys-86–Cys-97 and Cys-108–Cys-125.

This sequence belongs to the cathelicidin family.

The protein localises to the secreted. Its function is as follows. Exerts a potent antimicrobial activity against Gram-negative and Gram-positive bacteria, including methicillin-resistant Staphylococcus aureus, and fungi. The sequence is that of Cathelicidin-6 (CATHL6) from Bos taurus (Bovine).